The following is a 165-amino-acid chain: Nutritionally-regulated adipose and cardiac-enriched protein (165 aa).

Positions 1-47 are disordered; that stretch reads MRSAARVSRSNSHPRTRHPTRENEGTTWGSQPSRTERDGDRKCPPSI. Residues 34–43 are compositionally biased toward basic and acidic residues; the sequence is RTERDGDRKC. The chain crosses the membrane as a helical span at residues 112-132; it reads GSLFLWLTLCALLGVVLVLYC.

In terms of tissue distribution, predominantly expressed in white adipose tissue (at protein level) and brown adipose tissue. Also detected in heart.

It localises to the cell membrane. This is Nutritionally-regulated adipose and cardiac-enriched protein (Nrac) from Mus musculus (Mouse).